The following is a 732-amino-acid chain: Ribosomal RNA large subunit methyltransferase K/L (732 aa).

The 113-residue stretch at 50–162 folds into the THUMP domain; sequence MAYRICLWSR…RGRLLLGLDL (113 aa). The disordered stretch occupies residues 396 to 424; it reads TERETSSEGDEPQGASGATSRPGPRNDGA.

Belongs to the methyltransferase superfamily. RlmKL family.

The protein localises to the cytoplasm. The enzyme catalyses guanosine(2445) in 23S rRNA + S-adenosyl-L-methionine = N(2)-methylguanosine(2445) in 23S rRNA + S-adenosyl-L-homocysteine + H(+). The catalysed reaction is guanosine(2069) in 23S rRNA + S-adenosyl-L-methionine = N(2)-methylguanosine(2069) in 23S rRNA + S-adenosyl-L-homocysteine + H(+). Its function is as follows. Specifically methylates the guanine in position 2445 (m2G2445) and the guanine in position 2069 (m7G2069) of 23S rRNA. In Chromohalobacter salexigens (strain ATCC BAA-138 / DSM 3043 / CIP 106854 / NCIMB 13768 / 1H11), this protein is Ribosomal RNA large subunit methyltransferase K/L.